The following is a 120-amino-acid chain: uncharacterized protein (120 aa).

This is an uncharacterized protein from Mycobacterium tuberculosis (strain CDC 1551 / Oshkosh).